The chain runs to 185 residues: Avirulence protein ATR39-1 (185 aa).

The first 20 residues, 1 to 20, serve as a signal peptide directing secretion; that stretch reads MVKCTPLLALTVIVSAGSDA. Residues 49–66 carry the RxLR-dEER motif; that stretch reads RVLRASDVPDEVAAGESR.

The protein belongs to the RxLR effector family.

It is found in the secreted. The protein resides in the host cell. Secreted effector that acts as an elicitor of hypersensitive response (HR) specifically on plants carrying defense protein RPP39. The allele ATR39-1 is recognized by RPP39, whereas the ATR39-2 allele is not recognized. The chain is Avirulence protein ATR39-1 from Hyaloperonospora arabidopsidis (strain Emoy2) (Downy mildew agent).